A 417-amino-acid chain; its full sequence is Serine hydroxymethyltransferase (417 aa).

Residues L121 and 125–127 (GHL) each bind (6S)-5,6,7,8-tetrahydrofolate. At K229 the chain carries N6-(pyridoxal phosphate)lysine. 355 to 357 (SPF) serves as a coordination point for (6S)-5,6,7,8-tetrahydrofolate.

The protein belongs to the SHMT family. As to quaternary structure, homodimer. Requires pyridoxal 5'-phosphate as cofactor.

It is found in the cytoplasm. The enzyme catalyses (6R)-5,10-methylene-5,6,7,8-tetrahydrofolate + glycine + H2O = (6S)-5,6,7,8-tetrahydrofolate + L-serine. Its pathway is one-carbon metabolism; tetrahydrofolate interconversion. The protein operates within amino-acid biosynthesis; glycine biosynthesis; glycine from L-serine: step 1/1. Catalyzes the reversible interconversion of serine and glycine with tetrahydrofolate (THF) serving as the one-carbon carrier. This reaction serves as the major source of one-carbon groups required for the biosynthesis of purines, thymidylate, methionine, and other important biomolecules. Also exhibits THF-independent aldolase activity toward beta-hydroxyamino acids, producing glycine and aldehydes, via a retro-aldol mechanism. In Yersinia enterocolitica serotype O:8 / biotype 1B (strain NCTC 13174 / 8081), this protein is Serine hydroxymethyltransferase.